The sequence spans 113 residues: Large ribosomal subunit protein uL22 (113 aa).

This sequence belongs to the universal ribosomal protein uL22 family. In terms of assembly, part of the 50S ribosomal subunit.

Its function is as follows. This protein binds specifically to 23S rRNA; its binding is stimulated by other ribosomal proteins, e.g. L4, L17, and L20. It is important during the early stages of 50S assembly. It makes multiple contacts with different domains of the 23S rRNA in the assembled 50S subunit and ribosome. Functionally, the globular domain of the protein is located near the polypeptide exit tunnel on the outside of the subunit, while an extended beta-hairpin is found that lines the wall of the exit tunnel in the center of the 70S ribosome. The chain is Large ribosomal subunit protein uL22 from Xylella fastidiosa (strain M12).